The chain runs to 275 residues: Shikimate dehydrogenase (NADP(+)) (275 aa).

Residues S19 to S21 and T66 each bind shikimate. K70 acts as the Proton acceptor in catalysis. E82 serves as a coordination point for NADP(+). Shikimate is bound by residues N91 and D106. Residues G130 to A134, N154 to K159, and M217 each bind NADP(+). A shikimate-binding site is contributed by Y219. G241 lines the NADP(+) pocket.

It belongs to the shikimate dehydrogenase family. As to quaternary structure, homodimer.

It carries out the reaction shikimate + NADP(+) = 3-dehydroshikimate + NADPH + H(+). It functions in the pathway metabolic intermediate biosynthesis; chorismate biosynthesis; chorismate from D-erythrose 4-phosphate and phosphoenolpyruvate: step 4/7. Functionally, involved in the biosynthesis of the chorismate, which leads to the biosynthesis of aromatic amino acids. Catalyzes the reversible NADPH linked reduction of 3-dehydroshikimate (DHSA) to yield shikimate (SA). This is Shikimate dehydrogenase (NADP(+)) from Colwellia psychrerythraea (strain 34H / ATCC BAA-681) (Vibrio psychroerythus).